We begin with the raw amino-acid sequence, 245 residues long: DNA polymerase sliding clamp (245 aa).

It belongs to the PCNA family. In terms of assembly, homotrimer. The subunits circularize to form a toroid; DNA passes through its center. Replication factor C (RFC) is required to load the toroid on the DNA.

Its function is as follows. Sliding clamp subunit that acts as a moving platform for DNA processing. Responsible for tethering the catalytic subunit of DNA polymerase and other proteins to DNA during high-speed replication. This is DNA polymerase sliding clamp from Methanosarcina mazei (strain ATCC BAA-159 / DSM 3647 / Goe1 / Go1 / JCM 11833 / OCM 88) (Methanosarcina frisia).